The sequence spans 192 residues: GTP cyclohydrolase 1 (192 aa).

Zn(2+) is bound by residues Cys81, His84, and Cys153.

The protein belongs to the GTP cyclohydrolase I family. Toroid-shaped homodecamer, composed of two pentamers of five dimers.

The catalysed reaction is GTP + H2O = 7,8-dihydroneopterin 3'-triphosphate + formate + H(+). It functions in the pathway cofactor biosynthesis; 7,8-dihydroneopterin triphosphate biosynthesis; 7,8-dihydroneopterin triphosphate from GTP: step 1/1. In Streptococcus mutans serotype c (strain ATCC 700610 / UA159), this protein is GTP cyclohydrolase 1.